We begin with the raw amino-acid sequence, 1238 residues long: Lysine-specific demethylase JMJ703 (1238 aa).

Residues 56–79 (EECQPSAAVSRSDTPCSTSGTQTC) are disordered. Over residues 62–79 (AAVSRSDTPCSTSGTQTC) the composition is skewed to polar residues. Residues 154 to 195 (APVFYPTEEEFEDTLKYIESIRPMAEPYGICRIVPPSSWKPP) enclose the JmjN domain. The segment at 215–266 (KVDKLQNRKSSKKGRRGGMMKRRKLAESEENSATAHTQTGMQQSPERFGFEP) is disordered. Basic residues predominate over residues 221–238 (NRKSSKKGRRGGMMKRRK). Over residues 245–259 (NSATAHTQTGMQQSP) the composition is skewed to polar residues. A JmjC domain is found at 348 to 514 (KYAQSGWNLN…IGHNAVELYR (167 aa)). Fe cation is bound by residues H394, E396, and H482. Disordered stretches follow at residues 699–725 (GPRRSYMSQASAVSLVSSSTSNEQKDE), 777–798 (YNGGLGGHKGSAPGLPVSSSPS), 834–863 (TGDSRSLLGEHHNRSPAMIHDGTNMKSSLE), and 910–978 (ASSQ…LQRT). Residues 706-719 (SQASAVSLVSSSTS) are compositionally biased toward low complexity. Over residues 910-923 (ASSQQFVRTGPWTQ) the composition is skewed to polar residues. Residues 924 to 936 (SASHEASSPSTSA) show a composition bias toward low complexity. Polar residues predominate over residues 964–978 (SFSNQQPNDGRLQRT). The 59-residue stretch at 1019 to 1077 (VVHRFKCSVEPLEIGVVLSGRLWSSSQAIFPKGFRSRVKYFSIVDPIQMAYYISEILDA) folds into the FYR N-terminal domain. One can recognise an FYR C-terminal domain in the interval 1079–1169 (MQGPLFMVKL…HICTEYWRSR (91 aa)).

Fe(2+) serves as cofactor. In terms of tissue distribution, expressed in roots, leaf sheaths, stems and panicles.

It localises to the nucleus. The enzyme catalyses N(6),N(6),N(6)-trimethyl-L-lysyl(4)-[histone H3] + 3 2-oxoglutarate + 3 O2 = L-lysyl(4)-[histone H3] + 3 formaldehyde + 3 succinate + 3 CO2. Histone demethylase that demethylates 'Lys-4' (H3K4me) of histone H3 with a specific activity for H3K4me3, H3K4me2 and H3K4me1. No activity on H3K9me3/2/1, H3K27me3/2/1 and H3K36me3/2/1. Involved in the control of stem elongation by regulating methylation states of H3K4me3 on cytokinin oxidase (CKX) gene family, which may cause increased expression of CKX genes and reduced cytokinin levels. Prevents ectopic retrotransposition by regulating the levels of H3K4me3 in two non-LTR retrotransposons KARMA and LINE-1 (L1) and reinforcing their repressed states. In Oryza sativa subsp. japonica (Rice), this protein is Lysine-specific demethylase JMJ703 (JMJ703).